Here is a 213-residue protein sequence, read N- to C-terminus: Isopentenyl-diphosphate Delta-isomerase (213 aa).

Over residues 1–10 (MRDSMSEADR) the composition is skewed to basic and acidic residues. Positions 1–34 (MRDSMSEADRSSPGSGKTDREDETAENATQDVIA) are disordered. Residues histidine 51, histidine 58, and histidine 95 each contribute to the Mn(2+) site. Residues 56-193 (VRHRAFTCLL…RQLRLCPWFE (138 aa)) form the Nudix hydrolase domain. Mg(2+) is bound at residue glutamate 113. Mn(2+)-binding residues include glutamate 142 and glutamate 144. The active site involves glutamate 144.

Belongs to the IPP isomerase type 1 family. The cofactor is Mg(2+). Mn(2+) serves as cofactor.

Its subcellular location is the cytoplasm. The enzyme catalyses isopentenyl diphosphate = dimethylallyl diphosphate. Its pathway is isoprenoid biosynthesis; dimethylallyl diphosphate biosynthesis; dimethylallyl diphosphate from isopentenyl diphosphate: step 1/1. In terms of biological role, catalyzes the 1,3-allylic rearrangement of the homoallylic substrate isopentenyl (IPP) to its highly electrophilic allylic isomer, dimethylallyl diphosphate (DMAPP). The sequence is that of Isopentenyl-diphosphate Delta-isomerase from Halobacterium salinarum (strain ATCC 700922 / JCM 11081 / NRC-1) (Halobacterium halobium).